Consider the following 126-residue polypeptide: Protein ApaG (126 aa).

The ApaG domain maps to serine 2–histidine 126.

The chain is Protein ApaG from Shewanella sp. (strain ANA-3).